Consider the following 194-residue polypeptide: Dephospho-CoA kinase (194 aa).

In terms of domain architecture, DPCK spans 4–194; sequence ALGLTGSIGM…HLVSKLTEGT (191 aa). 12-17 contributes to the ATP binding site; it reads GMGKST.

This sequence belongs to the CoaE family.

Its subcellular location is the cytoplasm. It catalyses the reaction 3'-dephospho-CoA + ATP = ADP + CoA + H(+). It functions in the pathway cofactor biosynthesis; coenzyme A biosynthesis; CoA from (R)-pantothenate: step 5/5. Its function is as follows. Catalyzes the phosphorylation of the 3'-hydroxyl group of dephosphocoenzyme A to form coenzyme A. In Jannaschia sp. (strain CCS1), this protein is Dephospho-CoA kinase.